A 180-amino-acid chain; its full sequence is Large ribosomal subunit protein uL5c (180 aa).

Belongs to the universal ribosomal protein uL5 family. In terms of assembly, part of the 50S ribosomal subunit; contacts the 5S rRNA.

It localises to the plastid. The protein resides in the chloroplast. In terms of biological role, binds 5S rRNA, forms part of the central protuberance of the 50S subunit. The polypeptide is Large ribosomal subunit protein uL5c (rpl5) (Tetradesmus obliquus (Green alga)).